The primary structure comprises 557 residues: 2-isopropylmalate synthase (557 aa).

One can recognise a Pyruvate carboxyltransferase domain in the interval 33–307 (PIWCSSDLRD…DPQLDFSDID (275 aa)). Positions 42, 246, 248, and 282 each coordinate Mg(2+). A regulatory domain region spans residues 439-557 (ANSPYALVSH…SLSQQEAKAA (119 aa)).

This sequence belongs to the alpha-IPM synthase/homocitrate synthase family. LeuA type 2 subfamily. Homodimer. The cofactor is Mg(2+).

Its subcellular location is the cytoplasm. It carries out the reaction 3-methyl-2-oxobutanoate + acetyl-CoA + H2O = (2S)-2-isopropylmalate + CoA + H(+). The protein operates within amino-acid biosynthesis; L-leucine biosynthesis; L-leucine from 3-methyl-2-oxobutanoate: step 1/4. Functionally, catalyzes the condensation of the acetyl group of acetyl-CoA with 3-methyl-2-oxobutanoate (2-ketoisovalerate) to form 3-carboxy-3-hydroxy-4-methylpentanoate (2-isopropylmalate). The chain is 2-isopropylmalate synthase from Pseudomonas putida (strain W619).